Reading from the N-terminus, the 447-residue chain is Phosphoglucosamine mutase (447 aa).

The active-site Phosphoserine intermediate is the serine 88. Positions 88, 231, 233, and 235 each coordinate Mg(2+). The residue at position 88 (serine 88) is a Phosphoserine.

It belongs to the phosphohexose mutase family. The cofactor is Mg(2+). Post-translationally, activated by phosphorylation.

The catalysed reaction is alpha-D-glucosamine 1-phosphate = D-glucosamine 6-phosphate. In terms of biological role, catalyzes the conversion of glucosamine-6-phosphate to glucosamine-1-phosphate. This Methanococcus maripaludis (strain C7 / ATCC BAA-1331) protein is Phosphoglucosamine mutase.